The sequence spans 125 residues: Probable 4-amino-4-deoxy-L-arabinose-phosphoundecaprenol flippase subunit ArnF (125 aa).

Topologically, residues 1-2 are cytoplasmic; the sequence is MG. A helical transmembrane segment spans residues 3–23; sequence VMWGLISVAIASLAQLSLGFA. At 24–33 the chain is on the periplasmic side; the sequence is MMRLPSIAHP. Residues 34 to 54 traverse the membrane as a helical segment; the sequence is LAFISGLGAFNAATLALFAGL. The Cytoplasmic portion of the chain corresponds to 55-76; it reads AGYLVSVFCWQKTLHMLALSKA. The chain crosses the membrane as a helical span at residues 77 to 97; it reads YALLSLSYVLVWVASMLLPGL. The Periplasmic portion of the chain corresponds to 98–100; that stretch reads QGA. A helical membrane pass occupies residues 101 to 121; sequence FSLKAMLGVLCIMAGVMLIFL. Over 122–125 the chain is Cytoplasmic; sequence PARS.

This sequence belongs to the ArnF family. Heterodimer of ArnE and ArnF.

The protein localises to the cell inner membrane. The protein operates within bacterial outer membrane biogenesis; lipopolysaccharide biosynthesis. Its function is as follows. Translocates 4-amino-4-deoxy-L-arabinose-phosphoundecaprenol (alpha-L-Ara4N-phosphoundecaprenol) from the cytoplasmic to the periplasmic side of the inner membrane. The sequence is that of Probable 4-amino-4-deoxy-L-arabinose-phosphoundecaprenol flippase subunit ArnF from Salmonella paratyphi A (strain ATCC 9150 / SARB42).